Here is a 211-residue protein sequence, read N- to C-terminus: Protein-L-isoaspartate O-methyltransferase (211 aa).

The active site involves Ser62.

The protein belongs to the methyltransferase superfamily. L-isoaspartyl/D-aspartyl protein methyltransferase family.

It is found in the cytoplasm. The catalysed reaction is [protein]-L-isoaspartate + S-adenosyl-L-methionine = [protein]-L-isoaspartate alpha-methyl ester + S-adenosyl-L-homocysteine. Functionally, catalyzes the methyl esterification of L-isoaspartyl residues in peptides and proteins that result from spontaneous decomposition of normal L-aspartyl and L-asparaginyl residues. It plays a role in the repair and/or degradation of damaged proteins. The polypeptide is Protein-L-isoaspartate O-methyltransferase (Shewanella oneidensis (strain ATCC 700550 / JCM 31522 / CIP 106686 / LMG 19005 / NCIMB 14063 / MR-1)).